The chain runs to 385 residues: MDFGALPPEVNSGRMYCGPGSAPMVAAASAWNGLAAELSVAAVGYERVITTLQTEEWLGPASTLMVEAVAPYVAWMRATAIQAEQAASQARAAAAAYETAFAAIVPPPLIAANRARLTSLVTHNVFGQNTASIAATEAQYAEMWAQDAMAMYGYAGSSATATKVTPFAPPPNTTSPSAAATQLSAVAKAAGTSAGAAQSAIAELIAHLPNTLLGLTSPLSSALTAAATPGWLEWFINWYLPISQLFYNTVGLPYFAIGIGNSLITSWRALGWIGPEAAEAAAAAPAAVGAAVGGTGPVSAGLGNAATIGKLSLPPNWAGASPSLAPTVGSASAPLVSDIVEQPEAGAAGNLLGGMPLAGSGTGMGGAGPRYGFRVTVMSRPPFAG.

The protein belongs to the mycobacterial PPE family.

This is an uncharacterized protein from Mycobacterium tuberculosis (strain CDC 1551 / Oshkosh).